We begin with the raw amino-acid sequence, 337 residues long: Mitochondrial amidoxime-reducing component 1 (337 aa).

A lipid anchor (N-myristoyl glycine) is attached at Gly2. The Mitochondrial matrix portion of the chain corresponds to 2-20 (GAAGSSALARFVLLAQSRP). A helical; Signal-anchor for type II membrane protein transmembrane segment spans residues 21–40 (GWLGVAALGLTAVALGAVAW). The Cytoplasmic portion of the chain corresponds to 41–337 (RRAWPTRRRR…VGDPVYLLGQ (297 aa)). Mo-molybdopterin-binding residues include Lys67, Ser68, and Arg92. Positions 93-183 (FWLVINQEGN…KSQPYRLVHF (91 aa)) are MOSC N-terminal region. The MOSC domain maps to 187–335 (MRPRRPHQIA…IKVGDPVYLL (149 aa)). The Mo-molybdopterin site is built by Thr210, Ser211, Arg238, Asn240, Ser271, Arg272, Cys273, and Tyr317.

In terms of assembly, component of a complex composed of cytochrome b5, NADH-cytochrome b5 reductase and MTARC1. Mo-molybdopterin serves as cofactor.

The protein localises to the mitochondrion outer membrane. It is found in the membrane. It catalyses the reaction N(omega)-hydroxy-L-arginine + 2 Fe(II)-[cytochrome b5] + 2 H(+) = L-arginine + 2 Fe(III)-[cytochrome b5] + H2O. Functionally, catalyzes the reduction of N-oxygenated molecules, acting as a counterpart of cytochrome P450 and flavin-containing monooxygenases in metabolic cycles. As a component of prodrug-converting system, reduces a multitude of N-hydroxylated prodrugs particularly amidoximes, leading to increased drug bioavailability. May be involved in mitochondrial N(omega)-hydroxy-L-arginine (NOHA) reduction, regulating endogenous nitric oxide levels and biosynthesis. Postulated to cleave the N-OH bond of N-hydroxylated substrates in concert with electron transfer from NADH to cytochrome b5 reductase then to cytochrome b5, the ultimate electron donor that primes the active site for substrate reduction. This is Mitochondrial amidoxime-reducing component 1 from Homo sapiens (Human).